Here is a 119-residue protein sequence, read N- to C-terminus: Large ribosomal subunit protein eL8 (119 aa).

It belongs to the eukaryotic ribosomal protein eL8 family. As to quaternary structure, part of the 50S ribosomal subunit. Probably part of the RNase P complex.

It is found in the cytoplasm. In terms of biological role, multifunctional RNA-binding protein that recognizes the K-turn motif in ribosomal RNA, the RNA component of RNase P, box H/ACA, box C/D and box C'/D' sRNAs. This is Large ribosomal subunit protein eL8 from Archaeoglobus fulgidus (strain ATCC 49558 / DSM 4304 / JCM 9628 / NBRC 100126 / VC-16).